The sequence spans 356 residues: MTRPIQASLDLQALKQNLSIVRQAAPYARVWSVVKANAYGHGIERIWSALGATDGFALLNLEEAITLRERGWKGPILMLEGFFHAQDLEIYDQHRLTTCVHSNWQLKALQNARLKAPLDIYLKVNSGMNRLGFQPDRVLTVWQQLRAMANVGEMTLMSHFAEAEHPDGISSAMARIEQAAEGLECRRSLANSAATLWHQEAHFDWVRPGIILYGASPSGQWRDIANTGLRPVMTLSSEIIGVQTLKAGERVGYGGRYTARDEQRIGIVAAGYADGYPRHAPTGTPVLVDGVLTMTVGTVSMDMLAVDLTPCPQAGIGTPVELWGKEIKIDDVAAAAGTVGYELMCALALRVPVVTV.

K35 (proton acceptor; specific for D-alanine) is an active-site residue. N6-(pyridoxal phosphate)lysine is present on K35. R130 provides a ligand contact to substrate. Y253 acts as the Proton acceptor; specific for L-alanine in catalysis. A substrate-binding site is contributed by M301.

Belongs to the alanine racemase family. Requires pyridoxal 5'-phosphate as cofactor.

It catalyses the reaction L-alanine = D-alanine. Functionally, isomerizes L-alanine to D-alanine which is then oxidized to pyruvate by DadA. The polypeptide is Alanine racemase, catabolic (dadX) (Escherichia coli O6:H1 (strain CFT073 / ATCC 700928 / UPEC)).